Here is a 508-residue protein sequence, read N- to C-terminus: Photosystem II CP47 reaction center protein (508 aa).

The next 6 helical transmembrane spans lie at S21 to S36, I101 to W115, G140 to F156, I203 to S218, V237 to V252, and T457 to R472.

This sequence belongs to the PsbB/PsbC family. PsbB subfamily. As to quaternary structure, PSII is composed of 1 copy each of membrane proteins PsbA, PsbB, PsbC, PsbD, PsbE, PsbF, PsbH, PsbI, PsbJ, PsbK, PsbL, PsbM, PsbT, PsbX, PsbY, PsbZ, Psb30/Ycf12, at least 3 peripheral proteins of the oxygen-evolving complex and a large number of cofactors. It forms dimeric complexes. The cofactor is Binds multiple chlorophylls. PSII binds additional chlorophylls, carotenoids and specific lipids..

It localises to the plastid. The protein localises to the chloroplast thylakoid membrane. In terms of biological role, one of the components of the core complex of photosystem II (PSII). It binds chlorophyll and helps catalyze the primary light-induced photochemical processes of PSII. PSII is a light-driven water:plastoquinone oxidoreductase, using light energy to abstract electrons from H(2)O, generating O(2) and a proton gradient subsequently used for ATP formation. This Angiopteris evecta (Mule's foot fern) protein is Photosystem II CP47 reaction center protein.